A 143-amino-acid polypeptide reads, in one-letter code: Ponticulin (143 aa).

Residues Met1–Ala22 form the signal peptide. An N-linked (GlcNAc...) asparagine glycan is attached at Asn111. Ser118 is lipidated: GPI-like-anchor amidated serine. Positions Ser119–Phe143 are cleaved as a propeptide — removed in mature form.

Belongs to the ponticulin family. Monomer. In terms of processing, disulfide bond(s) stabilize the native, actin-binding conformation of ponticulin. Post-translationally, the GPI-like-anchor contains a phosphoceramide group, rather than a phosphatidyl group.

The protein localises to the cell membrane. In terms of biological role, binds F-actin and nucleates actin assembly. Major high affinity link between the plasma membrane and the cortical actin network. This chain is Ponticulin (ponA), found in Dictyostelium discoideum (Social amoeba).